Consider the following 151-residue polypeptide: MDGSKAKKVAAKKFGGPRKKSVTKSIKAGLQFPVGRIGRYLKKGRYAQRVGSGAPVYLAAVLEYLAAEVLELAGNAAKDNKKTRIVPRHLLLAIRNDQELGRLLSGVTIAHGGVIPNINPVLLPKKAAEKAEKAGAAPKSPKKTTKSPKKA.

An N-acetylmethionine modification is found at M1. Disordered regions lie at residues 1–22 (MDGS…KKSV) and 129–151 (EKAE…PKKA). 2 short sequence motifs (SPKK motif) span residues 140 to 143 (SPKK) and 147 to 150 (SPKK). The span at 140–151 (SPKKTTKSPKKA) shows a compositional bias: basic residues.

Belongs to the histone H2A family. The nucleosome is a histone octamer containing two molecules each of H2A, H2B, H3 and H4 assembled in one H3-H4 heterotetramer and two H2A-H2B heterodimers. The octamer wraps approximately 147 bp of DNA. In terms of processing, phosphorylated within its C-terminal part, probably at the SPKK motifs.

Its subcellular location is the nucleus. It is found in the chromosome. Its function is as follows. Core component of nucleosome. Nucleosomes wrap and compact DNA into chromatin, limiting DNA accessibility to the cellular machineries which require DNA as a template. Histones thereby play a central role in transcription regulation, DNA repair, DNA replication and chromosomal stability. DNA accessibility is regulated via a complex set of post-translational modifications of histones, also called histone code, and nucleosome remodeling. The chain is Histone H2A.2.1 from Triticum aestivum (Wheat).